The primary structure comprises 708 residues: Leukotoxin translocation ATP-binding protein LktB (708 aa).

In terms of domain architecture, Peptidase C39 spans methionine 1–valine 126. Residues phenylalanine 155–glutamine 437 form the ABC transmembrane type-1 domain. 5 helical membrane-spanning segments follow: residues leucine 159–valine 179, leucine 192–leucine 212, alanine 270–tyrosine 290, leucine 296–leucine 316, and valine 389–glycine 409. Residues isoleucine 469–glutamine 704 form the ABC transporter domain. Glycine 503 to serine 510 is an ATP binding site.

Belongs to the ABC transporter superfamily. Protein-1 exporter (TC 3.A.1.109) family. In terms of assembly, homodimer.

The protein localises to the cell inner membrane. The enzyme catalyses ATP + H2O + proteinSide 1 = ADP + phosphate + proteinSide 2.. In terms of biological role, part of the ABC transporter complex LktBD involved in leukotoxin export. Transmembrane domains (TMD) form a pore in the inner membrane and the ATP-binding domain (NBD) is responsible for energy generation. The sequence is that of Leukotoxin translocation ATP-binding protein LktB (lktB) from Mannheimia haemolytica (Pasteurella haemolytica).